We begin with the raw amino-acid sequence, 879 residues long: Metabotropic glutamate receptor 3 (879 aa).

The N-terminal stretch at methionine 1–glycine 24 is a signal peptide. Over aspartate 25–alanine 577 the chain is Extracellular. Cysteine 57 and cysteine 99 are disulfide-bonded. L-glutamate is bound by residues serine 151 and alanine 172–threonine 174. Asparagine 209 carries an N-linked (GlcNAc...) asparagine glycan. Residue tyrosine 222 coordinates L-glutamate. Intrachain disulfides connect cysteine 240-cysteine 527, cysteine 361-cysteine 373, cysteine 412-cysteine 419, cysteine 509-cysteine 528, cysteine 513-cysteine 531, cysteine 534-cysteine 546, and cysteine 549-cysteine 562. The N-linked (GlcNAc...) asparagine glycan is linked to asparagine 292. Position 301 (aspartate 301) interacts with L-glutamate. Lysine 389 contributes to the L-glutamate binding site. Asparagine 414 and asparagine 439 each carry an N-linked (GlcNAc...) asparagine glycan. A helical transmembrane segment spans residues isoleucine 578–phenylalanine 598. The Cytoplasmic segment spans residues isoleucine 599–glutamate 613. Residues leucine 614 to alanine 634 form a helical membrane-spanning segment. Over lysine 635–glutamine 688 the chain is Extracellular. A helical transmembrane segment spans residues valine 689–leucine 709. The Cytoplasmic portion of the chain corresponds to glutamate 710 to serine 735. Residues serine 736–phenylalanine 756 form a helical membrane-spanning segment. Residues lysine 757–lysine 769 lie on the Extracellular side of the membrane. Residues phenylalanine 770–tyrosine 790 form a helical membrane-spanning segment. Over valine 791–valine 807 the chain is Cytoplasmic. The chain crosses the membrane as a helical span at residues serine 808 to phenylalanine 828. At glutamine 829 to leucine 879 the chain is on the extracellular side.

Belongs to the G-protein coupled receptor 3 family. In terms of assembly, interacts with TAMALIN.

It is found in the cell membrane. Functionally, G-protein coupled receptor for glutamate. Ligand binding causes a conformation change that triggers signaling via guanine nucleotide-binding proteins (G proteins) and modulates the activity of down-stream effectors. Signaling inhibits adenylate cyclase activity. This Macaca fascicularis (Crab-eating macaque) protein is Metabotropic glutamate receptor 3 (GRM3).